We begin with the raw amino-acid sequence, 538 residues long: RNA-binding protein RO60 (538 aa).

Met1 is modified (N-acetylmethionine). Residues Ser4 and Ser19 each carry the phosphoserine modification. One can recognise a TROVE domain in the interval 16–369; that stretch reads IANSQDGYVW…TFKTVEPTGK (354 aa). Residues 120–284 are RNA-binding; it reads RIPTHLFTFI…EMPLTALLRN (165 aa). 2 positions are modified to N6-acetyllysine: Lys224 and Lys359. The VWFA-like domain stretch occupies residues 361–538; it reads FKTVEPTGKR…VIRNFTLDMI (178 aa). The a divalent metal cation site is built by Ser378, Ser380, and Thr445.

This sequence belongs to the Ro 60 kDa family. In terms of assembly, identified in a IGF2BP1-dependent mRNP granule complex containing untranslated mRNAs. Found in a complex with PUF60 and Y5 RNA. Interacts with RAB11FIP5.

The protein localises to the cytoplasm. In terms of biological role, RNA-binding protein that binds to misfolded non-coding RNAs, pre-5S rRNA, and several small cytoplasmic RNA molecules known as Y RNAs. Binds to endogenous Alu retroelements which are induced by type I interferon and stimulate porinflammatory cytokine secretion. Regulates the expression of Alu retroelements as well as inflammatory genes. May play roles in cilia formation and/or maintenance. The chain is RNA-binding protein RO60 from Homo sapiens (Human).